Reading from the N-terminus, the 118-residue chain is Small ribosomal subunit protein uS13 (118 aa).

Positions 92–118 (RRGLPVRGQRTKTNARTRKGPRKPIKK) are disordered.

It belongs to the universal ribosomal protein uS13 family. Part of the 30S ribosomal subunit. Forms a loose heterodimer with protein S19. Forms two bridges to the 50S subunit in the 70S ribosome.

Located at the top of the head of the 30S subunit, it contacts several helices of the 16S rRNA. In the 70S ribosome it contacts the 23S rRNA (bridge B1a) and protein L5 of the 50S subunit (bridge B1b), connecting the 2 subunits; these bridges are implicated in subunit movement. Contacts the tRNAs in the A and P-sites. The polypeptide is Small ribosomal subunit protein uS13 (Yersinia pestis).